The sequence spans 459 residues: Ribulose bisphosphate carboxylase (459 aa).

Asparagine 111 contributes to the substrate binding site. Catalysis depends on lysine 166, which acts as the Proton acceptor. Lysine 168 lines the substrate pocket. Residues lysine 191, aspartate 193, and glutamate 194 each contribute to the Mg(2+) site. Lysine 191 is subject to N6-carboxylysine. Histidine 287 (proton acceptor) is an active-site residue. Positions 288, 321, and 368 each coordinate substrate.

This sequence belongs to the RuBisCO large chain family. Type II subfamily. As to quaternary structure, the complex is approximately 350 kDa when isolated from either T.denitrificans or R.sphaeroides, suggesting a homohexamer or homooctamer structure. Mg(2+) serves as cofactor.

It catalyses the reaction 2 (2R)-3-phosphoglycerate + 2 H(+) = D-ribulose 1,5-bisphosphate + CO2 + H2O. It carries out the reaction D-ribulose 1,5-bisphosphate + O2 = 2-phosphoglycolate + (2R)-3-phosphoglycerate + 2 H(+). RuBisCO catalyzes two reactions: the carboxylation of D-ribulose 1,5-bisphosphate, the primary event in carbon dioxide fixation, as well as the oxidative fragmentation of the pentose substrate. Both reactions occur simultaneously and in competition at the same active site. The chain is Ribulose bisphosphate carboxylase (cbbM) from Thiobacillus denitrificans (strain ATCC 25259 / T1).